Here is a 1411-residue protein sequence, read N- to C-terminus: Early endosome antigen 1 (1411 aa).

The segment at 1-27 is disordered; that stretch reads MLRRILQRTPGRVGSQGSDLDSSATPI. Residues 15–27 show a composition bias toward polar residues; the sequence is SQGSDLDSSATPI. The C2H2-type zinc-finger motif lies at 41–64; the sequence is FICPQCMKSLGSADELFKHYEAVH. Ser52 and Ser70 each carry phosphoserine. Residues 74 to 1348 adopt a coiled-coil conformation; sequence GESNLALKRD…IKHTQALNRK (1275 aa). The segment at 473-501 is disordered; the sequence is VTNSTELQHQLDKTKQQHQEQQALQQSTT. A compositionally biased stretch (basic and acidic residues) spans 481 to 490; it reads HQLDKTKQQH. The FYVE-type zinc finger occupies 1352 to 1410; sequence DNEVQNCMACGKGFSVTVRRHHCRQCGNIFCAECSAKNALTPSSKKPVRVCDACFNDLQ. Zn(2+) contacts are provided by Cys1358, Cys1361, Cys1374, Cys1377, Cys1382, Cys1385, Cys1402, and Cys1405.

In terms of assembly, homodimer. Binds STX6. Binds RAB5A, RAB5B, RAB5C and RAB22A that have been activated by GTP-binding. Interacts with RAB31. Interacts with ERBB2. Interacts with SAMD9 and SAMD9L. May interact with PLEKHF2.

It is found in the cytoplasm. It localises to the early endosome membrane. Functionally, binds phospholipid vesicles containing phosphatidylinositol 3-phosphate and participates in endosomal trafficking. The chain is Early endosome antigen 1 (EEA1) from Homo sapiens (Human).